Consider the following 315-residue polypeptide: uncharacterized protein (315 aa).

The next 3 helical transmembrane spans lie at 19–39 (IGAG…GNVF), 56–76 (TVLV…LHSF), and 81–101 (PLKK…ISLI). The span at 154-171 (EDSASSGRTSSSVNQPIQ) shows a compositional bias: polar residues. Residues 154–214 (EDSASSGRTS…EREARAQEHD (61 aa)) form a disordered region. Residues 203–214 (GGEREARAQEHD) show a composition bias toward basic and acidic residues.

This sequence belongs to the ATPase C chain family.

The protein localises to the mitochondrion membrane. This is an uncharacterized protein from Arabidopsis thaliana (Mouse-ear cress).